A 392-amino-acid polypeptide reads, in one-letter code: Phosphoglycerate kinase (392 aa).

Substrate contacts are provided by residues 21-23 (DFN), arginine 36, 59-62 (HLGR), arginine 113, and arginine 146. ATP-binding positions include lysine 197, glutamate 319, and 345–348 (GGDT).

Belongs to the phosphoglycerate kinase family. As to quaternary structure, monomer.

The protein resides in the cytoplasm. The enzyme catalyses (2R)-3-phosphoglycerate + ATP = (2R)-3-phospho-glyceroyl phosphate + ADP. The protein operates within carbohydrate degradation; glycolysis; pyruvate from D-glyceraldehyde 3-phosphate: step 2/5. This is Phosphoglycerate kinase from Francisella philomiragia subsp. philomiragia (strain ATCC 25017 / CCUG 19701 / FSC 153 / O#319-036).